A 151-amino-acid chain; its full sequence is MAPRKGKVQKEEVQVQLGPQVLDGEKVFAVCHIYASYNDTFVHVTDLSGRETIVRITGGQKVKADRDESSPYAAMLAAQDVAEKCKSLGINCLHIKIRATGGNKTKTPGPGGQSALRALARAGMKIGRIEDVTPVPSDSTRRKGGRRGRRL.

Residues 129–151 form a disordered region; that stretch reads IEDVTPVPSDSTRRKGGRRGRRL. Over residues 142–151 the composition is skewed to basic residues; sequence RKGGRRGRRL.

The protein belongs to the universal ribosomal protein uS11 family.

This chain is Small ribosomal subunit protein uS11 (RPS14), found in Procambarus clarkii (Red swamp crayfish).